The primary structure comprises 308 residues: Ribonuclease Z (308 aa).

Zn(2+) contacts are provided by histidine 63, histidine 65, aspartate 67, histidine 68, histidine 140, aspartate 211, and histidine 269. Residue aspartate 67 is the Proton acceptor of the active site.

This sequence belongs to the RNase Z family. As to quaternary structure, homodimer. Zn(2+) serves as cofactor.

The enzyme catalyses Endonucleolytic cleavage of RNA, removing extra 3' nucleotides from tRNA precursor, generating 3' termini of tRNAs. A 3'-hydroxy group is left at the tRNA terminus and a 5'-phosphoryl group is left at the trailer molecule.. Its function is as follows. Zinc phosphodiesterase, which displays some tRNA 3'-processing endonuclease activity. Probably involved in tRNA maturation, by removing a 3'-trailer from precursor tRNA. The polypeptide is Ribonuclease Z (Bacillus velezensis (strain DSM 23117 / BGSC 10A6 / LMG 26770 / FZB42) (Bacillus amyloliquefaciens subsp. plantarum)).